The sequence spans 454 residues: Serine--tRNA ligase (454 aa).

Position 247 to 249 (247 to 249 (TAE)) interacts with L-serine. Residues 278 to 280 (RKE) and Val294 each bind ATP. Glu301 provides a ligand contact to L-serine. Residue 365–368 (ELAS) participates in ATP binding. Position 400 (Thr400) interacts with L-serine.

Belongs to the class-II aminoacyl-tRNA synthetase family. Type-1 seryl-tRNA synthetase subfamily. Homodimer. The tRNA molecule binds across the dimer.

Its subcellular location is the cytoplasm. It carries out the reaction tRNA(Ser) + L-serine + ATP = L-seryl-tRNA(Ser) + AMP + diphosphate + H(+). The enzyme catalyses tRNA(Sec) + L-serine + ATP = L-seryl-tRNA(Sec) + AMP + diphosphate + H(+). Its pathway is aminoacyl-tRNA biosynthesis; selenocysteinyl-tRNA(Sec) biosynthesis; L-seryl-tRNA(Sec) from L-serine and tRNA(Sec): step 1/1. Functionally, catalyzes the attachment of serine to tRNA(Ser). Is also able to aminoacylate tRNA(Sec) with serine, to form the misacylated tRNA L-seryl-tRNA(Sec), which will be further converted into selenocysteinyl-tRNA(Sec). This is Serine--tRNA ligase from Pyrobaculum calidifontis (strain DSM 21063 / JCM 11548 / VA1).